Consider the following 65-residue polypeptide: MLILTRRIGETIHIGDDITVTVLGINGQQVKFGTSAPREVDVHRQEIYERIHPGSASHFSGKHPY.

Belongs to the CsrA/RsmA family. In terms of assembly, homodimer; the beta-strands of each monomer intercalate to form a hydrophobic core, while the alpha-helices form wings that extend away from the core.

It is found in the cytoplasm. Functionally, a translational regulator that binds mRNA to regulate translation initiation and/or mRNA stability. Usually binds in the 5'-UTR at or near the Shine-Dalgarno sequence preventing ribosome-binding, thus repressing translation. Its main target seems to be the major flagellin gene, while its function is anatagonized by FliW. The protein is Translational regulator CsrA of Bordetella petrii (strain ATCC BAA-461 / DSM 12804 / CCUG 43448).